Here is a 388-residue protein sequence, read N- to C-terminus: Chorismate synthase (388 aa).

NADP(+) contacts are provided by Arg39 and Arg45. Residues 130–132 (RSS), 251–252 (NA), Gly296, 311–315 (KPIPT), and Arg337 each bind FMN.

Belongs to the chorismate synthase family. As to quaternary structure, homotetramer. FMNH2 is required as a cofactor.

It catalyses the reaction 5-O-(1-carboxyvinyl)-3-phosphoshikimate = chorismate + phosphate. It participates in metabolic intermediate biosynthesis; chorismate biosynthesis; chorismate from D-erythrose 4-phosphate and phosphoenolpyruvate: step 7/7. Catalyzes the anti-1,4-elimination of the C-3 phosphate and the C-6 proR hydrogen from 5-enolpyruvylshikimate-3-phosphate (EPSP) to yield chorismate, which is the branch point compound that serves as the starting substrate for the three terminal pathways of aromatic amino acid biosynthesis. This reaction introduces a second double bond into the aromatic ring system. In Streptococcus pyogenes serotype M2 (strain MGAS10270), this protein is Chorismate synthase.